The chain runs to 367 residues: Anthranilate phosphoribosyltransferase (367 aa).

Over residues 1 to 17 the composition is skewed to low complexity; that stretch reads MVLSSEASSAADHSAAA. Residues 1-22 form a disordered region; sequence MVLSSEASSAADHSAAAPIPTS. Residues glycine 104, 107-108, threonine 112, 114-117, 132-140, and glycine 144 contribute to the 5-phospho-alpha-D-ribose 1-diphosphate site; these read GD, NLST, and KHGNRAASS. Residue glycine 104 participates in anthranilate binding. Serine 116 contributes to the Mg(2+) binding site. Asparagine 135 is an anthranilate binding site. Arginine 190 contributes to the anthranilate binding site. Mg(2+) contacts are provided by aspartate 248 and glutamate 249.

The protein belongs to the anthranilate phosphoribosyltransferase family. As to quaternary structure, homodimer. Mg(2+) serves as cofactor.

It catalyses the reaction N-(5-phospho-beta-D-ribosyl)anthranilate + diphosphate = 5-phospho-alpha-D-ribose 1-diphosphate + anthranilate. It functions in the pathway amino-acid biosynthesis; L-tryptophan biosynthesis; L-tryptophan from chorismate: step 2/5. Catalyzes the transfer of the phosphoribosyl group of 5-phosphorylribose-1-pyrophosphate (PRPP) to anthranilate to yield N-(5'-phosphoribosyl)-anthranilate (PRA). The protein is Anthranilate phosphoribosyltransferase of Mycobacterium marinum (strain ATCC BAA-535 / M).